Reading from the N-terminus, the 275-residue chain is 2,3,4,5-tetrahydropyridine-2,6-dicarboxylate N-succinyltransferase (275 aa).

2 residues coordinate substrate: R104 and D141.

This sequence belongs to the transferase hexapeptide repeat family. Homotrimer.

The protein localises to the cytoplasm. The enzyme catalyses (S)-2,3,4,5-tetrahydrodipicolinate + succinyl-CoA + H2O = (S)-2-succinylamino-6-oxoheptanedioate + CoA. It participates in amino-acid biosynthesis; L-lysine biosynthesis via DAP pathway; LL-2,6-diaminopimelate from (S)-tetrahydrodipicolinate (succinylase route): step 1/3. This chain is 2,3,4,5-tetrahydropyridine-2,6-dicarboxylate N-succinyltransferase, found in Haemophilus influenzae (strain PittEE).